Reading from the N-terminus, the 337-residue chain is DNA-directed RNA polymerase subunit alpha (337 aa).

The segment at methionine 1–glutamate 233 is alpha N-terminal domain (alpha-NTD). An alpha C-terminal domain (alpha-CTD) region spans residues lysine 265–phenylalanine 337.

This sequence belongs to the RNA polymerase alpha chain family. In terms of assembly, in plastids the minimal PEP RNA polymerase catalytic core is composed of four subunits: alpha, beta, beta', and beta''. When a (nuclear-encoded) sigma factor is associated with the core the holoenzyme is formed, which can initiate transcription.

It localises to the plastid. It is found in the chloroplast. The enzyme catalyses RNA(n) + a ribonucleoside 5'-triphosphate = RNA(n+1) + diphosphate. DNA-dependent RNA polymerase catalyzes the transcription of DNA into RNA using the four ribonucleoside triphosphates as substrates. The chain is DNA-directed RNA polymerase subunit alpha from Nicotiana tomentosiformis (Tobacco).